A 212-amino-acid polypeptide reads, in one-letter code: Large ribosomal subunit protein uL3 (212 aa).

The interval 129-156 (RRGPMGHGSKNHRAPGSTGAGTTPGRIY) is disordered. The span at 142-153 (APGSTGAGTTPG) shows a compositional bias: low complexity.

Belongs to the universal ribosomal protein uL3 family. Part of the 50S ribosomal subunit. Forms a cluster with proteins L14 and L19.

One of the primary rRNA binding proteins, it binds directly near the 3'-end of the 23S rRNA, where it nucleates assembly of the 50S subunit. This chain is Large ribosomal subunit protein uL3, found in Acaryochloris marina (strain MBIC 11017).